A 729-amino-acid polypeptide reads, in one-letter code: Elongation factor 2 (729 aa).

One can recognise a tr-type G domain in the interval 19 to 262 (EQIRNIAIAA…MVCEHFPNPI (244 aa)). GTP is bound by residues 28–35 (AHVDHGKT), 94–98 (DTPGH), and 148–151 (NKVD). At His-597 the chain carries Diphthamide.

The protein belongs to the TRAFAC class translation factor GTPase superfamily. Classic translation factor GTPase family. EF-G/EF-2 subfamily.

Its subcellular location is the cytoplasm. In terms of biological role, catalyzes the GTP-dependent ribosomal translocation step during translation elongation. During this step, the ribosome changes from the pre-translocational (PRE) to the post-translocational (POST) state as the newly formed A-site-bound peptidyl-tRNA and P-site-bound deacylated tRNA move to the P and E sites, respectively. Catalyzes the coordinated movement of the two tRNA molecules, the mRNA and conformational changes in the ribosome. This Halomicrobium mukohataei (strain ATCC 700874 / DSM 12286 / JCM 9738 / NCIMB 13541) (Haloarcula mukohataei) protein is Elongation factor 2.